A 463-amino-acid polypeptide reads, in one-letter code: GTPase Der (463 aa).

Residues methionine 1–lysine 20 form a disordered region. EngA-type G domains are found at residues glycine 27–glutamate 190 and arginine 202–aspartate 375. Residues glycine 33–serine 40, aspartate 80–tryptophan 84, asparagine 142–aspartate 145, glycine 208–serine 215, aspartate 255–isoleucine 259, and asparagine 320–aspartate 323 each bind GTP. The KH-like domain occupies glutamine 376–glutamate 458.

Belongs to the TRAFAC class TrmE-Era-EngA-EngB-Septin-like GTPase superfamily. EngA (Der) GTPase family. Associates with the 50S ribosomal subunit.

Its function is as follows. GTPase that plays an essential role in the late steps of ribosome biogenesis. The chain is GTPase Der from Bifidobacterium longum (strain NCC 2705).